A 477-amino-acid chain; its full sequence is Protein AC142 (477 aa).

The protein localises to the host cytoplasm. It localises to the host nucleus. The protein resides in the virion. In terms of biological role, required for occlusion-derived virus (ODV) envelopment and subsequent embedding of virions into polyhedra. This Autographa californica nuclear polyhedrosis virus (AcMNPV) protein is Protein AC142 (ORF142).